A 537-amino-acid chain; its full sequence is Eukaryotic translation initiation factor 3 subunit L (537 aa).

Positions 300 to 512 (TFSSILLYIQ…IHIADTKVSH (213 aa)) constitute a PCI domain.

The protein belongs to the eIF-3 subunit L family. In terms of assembly, component of the eukaryotic translation initiation factor 3 (eIF-3) complex.

It is found in the cytoplasm. In terms of biological role, component of the eukaryotic translation initiation factor 3 (eIF-3) complex, which is involved in protein synthesis of a specialized repertoire of mRNAs and, together with other initiation factors, stimulates binding of mRNA and methionyl-tRNAi to the 40S ribosome. The eIF-3 complex specifically targets and initiates translation of a subset of mRNAs involved in cell proliferation. This Culex quinquefasciatus (Southern house mosquito) protein is Eukaryotic translation initiation factor 3 subunit L.